The primary structure comprises 266 residues: Thiazole synthase (266 aa).

K95 serves as the catalytic Schiff-base intermediate with DXP. Residues G156, 182–183 (AG), and 204–205 (NT) contribute to the 1-deoxy-D-xylulose 5-phosphate site.

The protein belongs to the ThiG family. Homotetramer. Forms heterodimers with either ThiH or ThiS.

Its subcellular location is the cytoplasm. The enzyme catalyses [ThiS sulfur-carrier protein]-C-terminal-Gly-aminoethanethioate + 2-iminoacetate + 1-deoxy-D-xylulose 5-phosphate = [ThiS sulfur-carrier protein]-C-terminal Gly-Gly + 2-[(2R,5Z)-2-carboxy-4-methylthiazol-5(2H)-ylidene]ethyl phosphate + 2 H2O + H(+). Its pathway is cofactor biosynthesis; thiamine diphosphate biosynthesis. Its function is as follows. Catalyzes the rearrangement of 1-deoxy-D-xylulose 5-phosphate (DXP) to produce the thiazole phosphate moiety of thiamine. Sulfur is provided by the thiocarboxylate moiety of the carrier protein ThiS. In vitro, sulfur can be provided by H(2)S. The protein is Thiazole synthase of Shewanella denitrificans (strain OS217 / ATCC BAA-1090 / DSM 15013).